The primary structure comprises 288 residues: Heme oxygenase 1 (288 aa).

The Cytoplasmic segment spans residues 1–265 (MERPQPDSMP…KPPLNTRSQA (265 aa)). 4 residues coordinate heme b: Lys-18, His-25, Tyr-134, and Arg-183. The tract at residues 223–260 (HDTKDQSPSRAPGLRQRASNKVQDSAPVETPRGKPPLN) is disordered. Ser-229 bears the Phosphoserine mark. A helical; Anchor for type IV membrane protein transmembrane segment spans residues 266–288 (PLLRWVLTLSFLVATVAVGLYAM).

This sequence belongs to the heme oxygenase family. (Microbial infection) Interacts with SARS-CoV-2 ORF3A protein; the interaction promotes ORF3A-induced autophagy but is unlikely to be involved in ORF3A-mediated induction of reticulophagy. In terms of assembly, homodimer and higher order homooligomer. Oligomerization is crucial for its stability and function in the endoplasmic reticulum. Interacts with FLVCR2; this interaction is potentiated in the presence of heme. In terms of processing, a soluble form arises by proteolytic removal of the membrane anchor. As to expression, expressed at higher levels in renal cancer tissue than in normal tissue (at protein level).

The protein localises to the endoplasmic reticulum membrane. It carries out the reaction heme b + 3 reduced [NADPH--hemoprotein reductase] + 3 O2 = biliverdin IXalpha + CO + Fe(2+) + 3 oxidized [NADPH--hemoprotein reductase] + 3 H2O + H(+). Functionally, catalyzes the oxidative cleavage of heme at the alpha-methene bridge carbon, released as carbon monoxide (CO), to generate biliverdin IXalpha, while releasing the central heme iron chelate as ferrous iron. Affords protection against programmed cell death and this cytoprotective effect relies on its ability to catabolize free heme and prevent it from sensitizing cells to undergo apoptosis. Its function is as follows. (Microbial infection) During SARS-COV-2 infection, promotes SARS-CoV-2 ORF3A-mediated autophagy but is unlikely to be required for ORF3A-mediated induction of reticulophagy. In terms of biological role, catalyzes the oxidative cleavage of heme at the alpha-methene bridge carbon, released as carbon monoxide (CO), to generate biliverdin IXalpha, while releasing the central heme iron chelate as ferrous iron. This Homo sapiens (Human) protein is Heme oxygenase 1 (HMOX1).